The sequence spans 589 residues: UvrABC system protein C (589 aa).

A GIY-YIG domain is found at 10 to 87; the sequence is ESSGVYLMKK…IKKYSPKYNI (78 aa). Residues 197–232 form the UVR domain; it reads SKLINELTALMNKASQDMDFEKSIIYREQIKELKSI.

Belongs to the UvrC family. Interacts with UvrB in an incision complex.

The protein localises to the cytoplasm. Its function is as follows. The UvrABC repair system catalyzes the recognition and processing of DNA lesions. UvrC both incises the 5' and 3' sides of the lesion. The N-terminal half is responsible for the 3' incision and the C-terminal half is responsible for the 5' incision. This chain is UvrABC system protein C, found in Fusobacterium nucleatum subsp. nucleatum (strain ATCC 25586 / DSM 15643 / BCRC 10681 / CIP 101130 / JCM 8532 / KCTC 2640 / LMG 13131 / VPI 4355).